Here is a 314-residue protein sequence, read N- to C-terminus: Triosephosphate isomerase, chloroplastic (314 aa).

The segment covering 1 to 22 has biased composition (polar residues); sequence MAVASTSLASQLSGPKSLSQPY. The disordered stretch occupies residues 1 to 25; sequence MAVASTSLASQLSGPKSLSQPYSGL. The N-terminal 59 residues, 1–59, are a transit peptide targeting the chloroplast; sequence MAVASTSLASQLSGPKSLSQPYSGLRRSCPKLDQSHSSLFQHLSLSSSSRKASRAVVAM. The substrate site is built by Asn-70 and Lys-72. Residue His-154 is the Electrophile of the active site. Residue Glu-224 is the Proton acceptor of the active site.

The protein belongs to the triosephosphate isomerase family. Homodimer.

Its subcellular location is the plastid. The protein resides in the chloroplast. It catalyses the reaction D-glyceraldehyde 3-phosphate = dihydroxyacetone phosphate. The protein operates within carbohydrate biosynthesis; Calvin cycle. This is Triosephosphate isomerase, chloroplastic (TPI) from Fragaria ananassa (Strawberry).